The following is a 152-amino-acid chain: MFRGASAINLDTKGRIAIPARYREPLQLEHQGRIVITVDIQSACLLLYPIHEWELIEAKLLKLSDTDKTQRSLKRMLLGYAHEVELDGNGRILLPPPLRQYANLDKRIMLVGQLNKFELWDEQAWLQQIDECQETIRGEELANNERLADFSL.

SpoVT-AbrB domains lie at 5 to 52 (ASAI…PIHE) and 81 to 124 (AHEV…DEQA).

It belongs to the MraZ family. In terms of assembly, forms oligomers.

It is found in the cytoplasm. The protein resides in the nucleoid. This chain is Transcriptional regulator MraZ, found in Shewanella oneidensis (strain ATCC 700550 / JCM 31522 / CIP 106686 / LMG 19005 / NCIMB 14063 / MR-1).